An 89-amino-acid polypeptide reads, in one-letter code: Small ribosomal subunit protein uS15 (89 aa).

Residues methionine 1 to glutamate 10 show a composition bias toward basic and acidic residues. Residues methionine 1–serine 24 are disordered.

This sequence belongs to the universal ribosomal protein uS15 family. As to quaternary structure, part of the 30S ribosomal subunit. Forms a bridge to the 50S subunit in the 70S ribosome, contacting the 23S rRNA.

One of the primary rRNA binding proteins, it binds directly to 16S rRNA where it helps nucleate assembly of the platform of the 30S subunit by binding and bridging several RNA helices of the 16S rRNA. In terms of biological role, forms an intersubunit bridge (bridge B4) with the 23S rRNA of the 50S subunit in the ribosome. This Rhodopseudomonas palustris (strain BisB5) protein is Small ribosomal subunit protein uS15.